The sequence spans 572 residues: NADH-ubiquinone oxidoreductase chain 5 (572 aa).

Helical transmembrane passes span 4-24 (ISFV…LYFL), 44-64 (IVMT…VLMI), 86-106 (IMLV…PNLI), 107-127 (SILL…IYFQ), 147-167 (VALL…YIFY), 170-190 (IMQN…AAMT), 217-237 (SSTL…ILST), 239-259 (WLGQ…GLGA), 268-288 (IIAL…SMGF), 294-314 (FHLL…GAII), 337-357 (SACF…AGFY), 372-394 (NMFS…FRLV), 422-442 (MGLL…IFPF), 457-477 (LFVC…NLFF), 490-510 (FLGS…FYPL), and 552-572 (LKIY…LLFL).

The protein belongs to the complex I subunit 5 family.

The protein localises to the mitochondrion inner membrane. The catalysed reaction is a ubiquinone + NADH + 5 H(+)(in) = a ubiquinol + NAD(+) + 4 H(+)(out). Its function is as follows. Core subunit of the mitochondrial membrane respiratory chain NADH dehydrogenase (Complex I) that is believed to belong to the minimal assembly required for catalysis. Complex I functions in the transfer of electrons from NADH to the respiratory chain. The immediate electron acceptor for the enzyme is believed to be ubiquinone. This Drosophila melanogaster (Fruit fly) protein is NADH-ubiquinone oxidoreductase chain 5 (mt:ND5).